The sequence spans 234 residues: S-adenosylmethionine synthase 1 (234 aa).

ATP-binding positions include 10 to 12 (DGK), 78 to 81 (SGRF), aspartate 89, 95 to 96 (RK), alanine 112, lysine 116, and lysine 120. Residue aspartate 89 coordinates L-methionine. Residue lysine 120 coordinates L-methionine.

It belongs to the AdoMet synthase family. In terms of assembly, homotetramer. Mn(2+) serves as cofactor. It depends on Mg(2+) as a cofactor. Co(2+) is required as a cofactor. The cofactor is K(+). As to expression, mainly in floral buds and roots.

The protein localises to the cytoplasm. It catalyses the reaction L-methionine + ATP + H2O = S-adenosyl-L-methionine + phosphate + diphosphate. The protein operates within amino-acid biosynthesis; S-adenosyl-L-methionine biosynthesis; S-adenosyl-L-methionine from L-methionine: step 1/1. Catalyzes the formation of S-adenosylmethionine from methionine and ATP. The reaction comprises two steps that are both catalyzed by the same enzyme: formation of S-adenosylmethionine (AdoMet) and triphosphate, and subsequent hydrolysis of the triphosphate. This chain is S-adenosylmethionine synthase 1 (SMS-1), found in Petroselinum crispum (Parsley).